Here is a 176-residue protein sequence, read N- to C-terminus: Small ribosomal subunit protein bS6 (176 aa).

The disordered stretch occupies residues 97 to 176 (DQYTPNDSPP…VEPVDTTSEE (80 aa)). Low complexity predominate over residues 140–160 (AVETVEPPAEPAEPVEAVETV). Acidic residues predominate over residues 161–176 (DTTEETVEPVDTTSEE).

The protein belongs to the bacterial ribosomal protein bS6 family.

Its function is as follows. Binds together with bS18 to 16S ribosomal RNA. This is Small ribosomal subunit protein bS6 from Gloeothece citriformis (strain PCC 7424) (Cyanothece sp. (strain PCC 7424)).